Consider the following 383-residue polypeptide: 6-hydroxynicotinate 3-monooxygenase (383 aa).

A signal peptide spans M1 to A26. FAD-binding positions include G15, E34–Q35, H47, R108, and L130. The active-site Proton acceptor is H47. Y214 acts as the Proton acceptor in catalysis. Residues D293 and A306–A307 each bind FAD.

The protein belongs to the 6-hydroxynicotinate 3-monooxygenase family. In terms of assembly, monomer. The cofactor is FAD.

The catalysed reaction is 6-hydroxynicotinate + NADH + O2 + 2 H(+) = 2,5-dihydroxypyridine + CO2 + NAD(+) + H2O. It participates in cofactor degradation; nicotinate degradation. Its activity is regulated as follows. Competitively inhibited by 6-hydroxynicotinaldehyde. Flavin-dependent monooxygenase (FMO) that catalyzes the decarboxylative hydroxylation of 6-hydroxynicotinic acid (6-HNA) to 2,5-dihydroxypyridine (2,5-DHP) with concomitant oxidation of NADH, a step in the aerobic nicotinate degradation pathway. Is also active on the non-natural substrate 5-chloro-6-hydroxynicotinate, and is much less efficient on the substrate analog 4-hydroxybenzoate. This chain is 6-hydroxynicotinate 3-monooxygenase, found in Bordetella bronchiseptica (strain ATCC BAA-588 / NCTC 13252 / RB50) (Alcaligenes bronchisepticus).